A 561-amino-acid polypeptide reads, in one-letter code: Probable galacturonosyltransferase 9 (561 aa).

Over 1 to 27 the chain is Cytoplasmic; it reads MAVAFRGGRGGVGSGQSTGLRSFFSYR. Residues 28-48 form a helical; Signal-anchor for type II membrane protein membrane-spanning segment; that stretch reads IFISALFSFLFLATFSVVLNS. At 49 to 561 the chain is on the lumenal side; it reads SRHQPHQDHT…EFVQMCNFGL (513 aa). Asn-124, Asn-320, Asn-346, and Asn-426 each carry an N-linked (GlcNAc...) asparagine glycan.

The protein belongs to the glycosyltransferase 8 family. Expressed in roots, inflorescences, siliques, leaves and stems.

The protein localises to the golgi apparatus membrane. The protein operates within glycan metabolism; pectin biosynthesis. May be involved in pectin synthesis. In Arabidopsis thaliana (Mouse-ear cress), this protein is Probable galacturonosyltransferase 9 (GAUT9).